The sequence spans 117 residues: Large ribosomal subunit protein bL20 (117 aa).

This sequence belongs to the bacterial ribosomal protein bL20 family.

In terms of biological role, binds directly to 23S ribosomal RNA and is necessary for the in vitro assembly process of the 50S ribosomal subunit. It is not involved in the protein synthesizing functions of that subunit. The sequence is that of Large ribosomal subunit protein bL20 from Pelotomaculum thermopropionicum (strain DSM 13744 / JCM 10971 / SI).